The chain runs to 368 residues: tRNA-specific 2-thiouridylase MnmA (368 aa).

Residues 11–18 (GMSGGVDS) and Met37 contribute to the ATP site. Positions 97-99 (NPD) are interaction with target base in tRNA. Cys102 functions as the Nucleophile in the catalytic mechanism. Residues Cys102 and Cys199 are joined by a disulfide bond. Position 127 (Gly127) interacts with ATP. An interaction with tRNA region spans residues 149–151 (KDQ). Cys199 (cysteine persulfide intermediate) is an active-site residue. Positions 311–312 (RY) are interaction with tRNA.

Belongs to the MnmA/TRMU family. Interacts with TusE.

The protein resides in the cytoplasm. It catalyses the reaction S-sulfanyl-L-cysteinyl-[protein] + uridine(34) in tRNA + AH2 + ATP = 2-thiouridine(34) in tRNA + L-cysteinyl-[protein] + A + AMP + diphosphate + H(+). Functionally, catalyzes the 2-thiolation of uridine at the wobble position (U34) of tRNA(Lys), tRNA(Glu) and tRNA(Gln), leading to the formation of s(2)U34, the first step of tRNA-mnm(5)s(2)U34 synthesis. Sulfur is provided by IscS, via a sulfur-relay system. Binds ATP and its substrate tRNAs. This chain is tRNA-specific 2-thiouridylase MnmA, found in Escherichia coli (strain SMS-3-5 / SECEC).